Reading from the N-terminus, the 115-residue chain is U3-lycotoxin-Ls1k (115 aa).

Positions 1 to 20 (MKFVLLFGVLLVTLFSYSSA) are cleaved as a signal peptide. Positions 21–44 (EMFDDFDQADEDELLSLIEKEEAR) are excised as a propeptide. 4 disulfide bridges follow: C48–C63, C55–C72, C62–C87, and C74–C85.

It belongs to the neurotoxin 19 (CSTX) family. 01 subfamily. In terms of tissue distribution, expressed by the venom gland.

The protein resides in the secreted. The sequence is that of U3-lycotoxin-Ls1k from Lycosa singoriensis (Wolf spider).